We begin with the raw amino-acid sequence, 206 residues long: Small ribosomal subunit protein uS4 (206 aa).

Residues 96 to 156 form the S4 RNA-binding domain; it reads TRLDNVVYRM…EKSKTQARII (61 aa).

This sequence belongs to the universal ribosomal protein uS4 family. In terms of assembly, part of the 30S ribosomal subunit. Contacts protein S5. The interaction surface between S4 and S5 is involved in control of translational fidelity.

One of the primary rRNA binding proteins, it binds directly to 16S rRNA where it nucleates assembly of the body of the 30S subunit. Functionally, with S5 and S12 plays an important role in translational accuracy. In Colwellia psychrerythraea (strain 34H / ATCC BAA-681) (Vibrio psychroerythus), this protein is Small ribosomal subunit protein uS4.